Here is a 430-residue protein sequence, read N- to C-terminus: Serine--tRNA ligase (430 aa).

237-239 (TAE) lines the L-serine pocket. ATP is bound at residue 268-270 (RSE). Glu291 provides a ligand contact to L-serine. 355–358 (EISS) provides a ligand contact to ATP. L-serine is bound at residue Ser391.

This sequence belongs to the class-II aminoacyl-tRNA synthetase family. Type-1 seryl-tRNA synthetase subfamily. In terms of assembly, homodimer. The tRNA molecule binds across the dimer.

It localises to the cytoplasm. The enzyme catalyses tRNA(Ser) + L-serine + ATP = L-seryl-tRNA(Ser) + AMP + diphosphate + H(+). It catalyses the reaction tRNA(Sec) + L-serine + ATP = L-seryl-tRNA(Sec) + AMP + diphosphate + H(+). Its pathway is aminoacyl-tRNA biosynthesis; selenocysteinyl-tRNA(Sec) biosynthesis; L-seryl-tRNA(Sec) from L-serine and tRNA(Sec): step 1/1. Its function is as follows. Catalyzes the attachment of serine to tRNA(Ser). Is also able to aminoacylate tRNA(Sec) with serine, to form the misacylated tRNA L-seryl-tRNA(Sec), which will be further converted into selenocysteinyl-tRNA(Sec). This Citrobacter koseri (strain ATCC BAA-895 / CDC 4225-83 / SGSC4696) protein is Serine--tRNA ligase.